Here is a 549-residue protein sequence, read N- to C-terminus: Cation/acetate symporter ActP (549 aa).

Transmembrane regions (helical) follow at residues 33 to 53 (WQAI…TYWA), 77 to 97 (LAIA…ALVF), 103 to 123 (GLIY…LIAE), 148 to 168 (ILSA…QMVG), 183 to 203 (IAVV…GMLA), 206 to 226 (WVQI…AFMV), 262 to 282 (ISAL…PHIL), 303 to 323 (GFMG…IMLV), 355 to 375 (LFLG…VAGL), 404 to 424 (VSKI…VLFE), 428 to 448 (IAFM…PIIL), 464 to 484 (GGWL…TIWV), and 493 to 513 (IFPY…GIWL).

This sequence belongs to the sodium:solute symporter (SSF) (TC 2.A.21) family.

The protein resides in the cell inner membrane. Transports acetate. The protein is Cation/acetate symporter ActP of Escherichia coli O1:K1 / APEC.